A 117-amino-acid polypeptide reads, in one-letter code: Large ribosomal subunit protein uL18 (117 aa).

This sequence belongs to the universal ribosomal protein uL18 family. Part of the 50S ribosomal subunit; part of the 5S rRNA/L5/L18/L25 subcomplex. Contacts the 5S and 23S rRNAs.

In terms of biological role, this is one of the proteins that bind and probably mediate the attachment of the 5S RNA into the large ribosomal subunit, where it forms part of the central protuberance. This chain is Large ribosomal subunit protein uL18, found in Cronobacter sakazakii (strain ATCC BAA-894) (Enterobacter sakazakii).